Here is a 323-residue protein sequence, read N- to C-terminus: tRNA dimethylallyltransferase (323 aa).

12-19 is an ATP binding site; it reads GPTAAGKT. 14-19 is a substrate binding site; that stretch reads TAAGKT. 2 interaction with substrate tRNA regions span residues 37–40 and 161–165; these read DSAL and QRLIR.

This sequence belongs to the IPP transferase family. In terms of assembly, monomer. Requires Mg(2+) as cofactor.

It carries out the reaction adenosine(37) in tRNA + dimethylallyl diphosphate = N(6)-dimethylallyladenosine(37) in tRNA + diphosphate. Its function is as follows. Catalyzes the transfer of a dimethylallyl group onto the adenine at position 37 in tRNAs that read codons beginning with uridine, leading to the formation of N6-(dimethylallyl)adenosine (i(6)A). In Pseudomonas syringae pv. syringae (strain B728a), this protein is tRNA dimethylallyltransferase.